Here is a 255-residue protein sequence, read N- to C-terminus: Small ribosomal subunit protein eS1 (255 aa).

The segment covering Met1–Lys18 has biased composition (basic residues). Residues Met1–Asp28 are disordered. Ala2 carries the post-translational modification N-acetylalanine; partial. Residues Arg19–Asp28 show a composition bias toward basic and acidic residues.

This sequence belongs to the eukaryotic ribosomal protein eS1 family. In terms of assembly, component of the small ribosomal subunit. Mature ribosomes consist of a small (40S) and a large (60S) subunit. The 40S subunit contains about 33 different proteins and 1 molecule of RNA (18S). The 60S subunit contains about 49 different proteins and 3 molecules of RNA (25S, 5.8S and 5S).

Its subcellular location is the cytoplasm. The sequence is that of Small ribosomal subunit protein eS1 from Ajellomyces capsulatus (strain G186AR / H82 / ATCC MYA-2454 / RMSCC 2432) (Darling's disease fungus).